A 159-amino-acid polypeptide reads, in one-letter code: Cyclic pyranopterin monophosphate synthase (159 aa).

Substrate-binding positions include Leu-75 to His-77 and Met-113 to Glu-114. Residue Asp-128 is part of the active site.

It belongs to the MoaC family. Homohexamer; trimer of dimers.

The catalysed reaction is (8S)-3',8-cyclo-7,8-dihydroguanosine 5'-triphosphate = cyclic pyranopterin phosphate + diphosphate. The protein operates within cofactor biosynthesis; molybdopterin biosynthesis. In terms of biological role, catalyzes the conversion of (8S)-3',8-cyclo-7,8-dihydroguanosine 5'-triphosphate to cyclic pyranopterin monophosphate (cPMP). The protein is Cyclic pyranopterin monophosphate synthase of Yersinia pseudotuberculosis serotype O:3 (strain YPIII).